A 446-amino-acid polypeptide reads, in one-letter code: Tubulin beta-2 chain (446 aa).

GTP contacts are provided by Gln11, Glu69, Ser138, Gly142, Thr143, Gly144, Asn204, and Asn226. Glu69 lines the Mg(2+) pocket. Residues 424–446 form a disordered region; that stretch reads QYQEATADEEGEFDEDEEGGGDE. Positions 429–446 are enriched in acidic residues; it reads TADEEGEFDEDEEGGGDE.

The protein belongs to the tubulin family. As to quaternary structure, dimer of alpha and beta chains. A typical microtubule is a hollow water-filled tube with an outer diameter of 25 nm and an inner diameter of 15 nM. Alpha-beta heterodimers associate head-to-tail to form protofilaments running lengthwise along the microtubule wall with the beta-tubulin subunit facing the microtubule plus end conferring a structural polarity. Microtubules usually have 13 protofilaments but different protofilament numbers can be found in some organisms and specialized cells. Mg(2+) serves as cofactor. In terms of tissue distribution, testis specific.

Its subcellular location is the cytoplasm. It is found in the cytoskeleton. Its function is as follows. Tubulin is the major constituent of microtubules, a cylinder consisting of laterally associated linear protofilaments composed of alpha- and beta-tubulin heterodimers. Microtubules grow by the addition of GTP-tubulin dimers to the microtubule end, where a stabilizing cap forms. Below the cap, tubulin dimers are in GDP-bound state, owing to GTPase activity of alpha-tubulin. In Drosophila melanogaster (Fruit fly), this protein is Tubulin beta-2 chain (betaTub85D).